The primary structure comprises 425 residues: MTMAKLTESMTNVLEGDSMDQDVESPVAIHQPKLPKQARDDLPRHISRDRTKRKIQRYVRKDGKCNVHHGNVRETYRYLTDIFTTLVDLKWRFNLLIFVMVYTVTWLFFGMIWWLIAYIRGDMDHIEDPSWTPCVTNLNGFVSAFLFSIETETTIGYGYRVITDKCPEGIILLLIQSVLGSIVNAFMVGCMFVKISQPKKRAETLVFSTHAVISMRDGKLCLMFRVGDLRNSHIVEASIRAKLIKSKQTSEGEFIPLNQSDINVGYYTGDDRLFLVSPLIISHEINQQSPFWEISKAQLPKEELEIVVILEGIVEATGMTCQARSSYITSEILWGYRFTPVLTMEDGFYEVDYNSFHETYETSTPSLSAKELAELANRAEVPLSWSVSSKLNQHAELETEEEEKNPEELTERNGDVANLENESKV.

At 1–91 (MTMAKLTESM…IFTTLVDLKW (91 aa)) the chain is on the cytoplasmic side. Phosphoserine is present on residues serine 18 and serine 25. A helical transmembrane segment spans residues 92 to 116 (RFNLLIFVMVYTVTWLFFGMIWWLI). Over 117-140 (AYIRGDMDHIEDPSWTPCVTNLNG) the chain is Extracellular. The helical; Pore-forming intramembrane region spans 141–152 (FVSAFLFSIETE). Residues 153-159 (TTIGYGY) constitute an intramembrane region (pore-forming). The Selectivity filter motif lies at 154–159 (TIGYGY). Residues 160–168 (RVITDKCPE) are Extracellular-facing. The chain crosses the membrane as a helical span at residues 169–190 (GIILLLIQSVLGSIVNAFMVGC). Topologically, residues 191–425 (MFVKISQPKK…VANLENESKV (235 aa)) are cytoplasmic. The interval 392-425 (NQHAELETEEEEKNPEELTERNGDVANLENESKV) is disordered. The short motif at 422-425 (ESKV) is the PDZ-binding element.

The protein belongs to the inward rectifier-type potassium channel (TC 1.A.2.1) family. KCNJ6 subfamily. As to quaternary structure, associates with KCNJ3/GIRK1to form a G-protein-activated heteromultimer pore-forming unit. Associates with KCNJ5/GRIK4 to form a G-protein-activated heteromultimer pore-forming unit. The resulting inward current is much larger. Interacts (via PDZ-binding motif) with SNX27 (via PDZ domain); the interaction is required when endocytosed to prevent degradation in lysosomes and promote recycling to the plasma membrane. Associates with KCNJ3/GRIK1 to form a G-protein-activated heteromultimer pore-forming unit. In terms of assembly, associates with KCNJ3/GRIK1 to form a G-protein-activated heteromultimer pore-forming unit. The resulting inward current is much larger. As to expression, expressed in the brain.

The protein localises to the membrane. The enzyme catalyses K(+)(in) = K(+)(out). Its activity is regulated as follows. Activated by phosphatidylinositol 4,5 biphosphate (PtdIns(4,5)P2). In terms of biological role, inward rectifier potassium channels are characterized by a greater tendency to allow potassium to flow into the cell rather than out of it. Their voltage dependence is regulated by the concentration of extracellular potassium; as external potassium is raised, the voltage range of the channel opening shifts to more positive voltages. The inward rectification is mainly due to the blockage of outward current by internal magnesium. This potassium channel is controlled by G proteins. Forms a functional channel in association with KCNJ3/GIRK1. Its function is as follows. Inward rectifier potassium channels are characterized by a greater tendency to allow potassium to flow into the cell rather than out of it. Their voltage dependence is regulated by the concentration of extracellular potassium; as external potassium is raised, the voltage range of the channel opening shifts to more positive voltages. The inward rectification is mainly due to the blockage of outward current by internal magnesium. This potassium channel is controlled by G proteins. The chain is G protein-activated inward rectifier potassium channel 2 (Kcnj6) from Mus musculus (Mouse).